Here is a 150-residue protein sequence, read N- to C-terminus: 3-dehydroquinate dehydratase (150 aa).

The Proton acceptor role is filled by Y26. Residues N77, H83, and D90 each contribute to the substrate site. H103 (proton donor) is an active-site residue. Residues 104-105 (LS) and R114 each bind substrate.

Belongs to the type-II 3-dehydroquinase family. Homododecamer.

It catalyses the reaction 3-dehydroquinate = 3-dehydroshikimate + H2O. Its pathway is metabolic intermediate biosynthesis; chorismate biosynthesis; chorismate from D-erythrose 4-phosphate and phosphoenolpyruvate: step 3/7. In terms of biological role, catalyzes a trans-dehydration via an enolate intermediate. This Pectobacterium carotovorum subsp. carotovorum (strain PC1) protein is 3-dehydroquinate dehydratase.